We begin with the raw amino-acid sequence, 413 residues long: Eukaryotic initiation factor 4A-11 (413 aa).

The Q motif signature appears at 40–68; sequence ESFDAMGLQENLLRGIYAYGFEKPSAIQQ. The 171-residue stretch at 71-241 folds into the Helicase ATP-binding domain; sequence IVPFCKGLDV…RKFMNKPVRI (171 aa). 84–91 contributes to the ATP binding site; it reads AQSGTGKT. The DEAD box motif lies at 189–192; sequence DEAD. Residues 252 to 413 enclose the Helicase C-terminal domain; it reads GIKQFYVNVD…ELPANVADLL (162 aa).

The protein belongs to the DEAD box helicase family. eIF4A subfamily. In terms of assembly, eIF4F is a multi-subunit complex, the composition of which varies with external and internal environmental conditions. It is composed of at least EIF4A, EIF4E and EIF4G.

The enzyme catalyses ATP + H2O = ADP + phosphate + H(+). Functionally, ATP-dependent RNA helicase which is a subunit of the eIF4F complex involved in cap recognition and is required for mRNA binding to ribosome. In the current model of translation initiation, eIF4A unwinds RNA secondary structures in the 5'-UTR of mRNAs which is necessary to allow efficient binding of the small ribosomal subunit, and subsequent scanning for the initiator codon. This is Eukaryotic initiation factor 4A-11 from Nicotiana tabacum (Common tobacco).